We begin with the raw amino-acid sequence, 228 residues long: 7-cyano-7-deazaguanine synthase (228 aa).

An ATP-binding site is contributed by 9-19 (LSGGPDSTTVL). Residues cysteine 193, cysteine 203, cysteine 206, and cysteine 209 each coordinate Zn(2+).

Belongs to the QueC family. Zn(2+) is required as a cofactor.

The catalysed reaction is 7-carboxy-7-deazaguanine + NH4(+) + ATP = 7-cyano-7-deazaguanine + ADP + phosphate + H2O + H(+). The protein operates within purine metabolism; 7-cyano-7-deazaguanine biosynthesis. In terms of biological role, catalyzes the ATP-dependent conversion of 7-carboxy-7-deazaguanine (CDG) to 7-cyano-7-deazaguanine (preQ(0)). The protein is 7-cyano-7-deazaguanine synthase of Rickettsia conorii (strain ATCC VR-613 / Malish 7).